The primary structure comprises 179 residues: Large ribosomal subunit protein uL5 (179 aa).

The protein belongs to the universal ribosomal protein uL5 family. In terms of assembly, part of the 50S ribosomal subunit; part of the 5S rRNA/L5/L18/L25 subcomplex. Contacts the 5S rRNA and the P site tRNA. Forms a bridge to the 30S subunit in the 70S ribosome.

This is one of the proteins that bind and probably mediate the attachment of the 5S RNA into the large ribosomal subunit, where it forms part of the central protuberance. In the 70S ribosome it contacts protein S13 of the 30S subunit (bridge B1b), connecting the 2 subunits; this bridge is implicated in subunit movement. Contacts the P site tRNA; the 5S rRNA and some of its associated proteins might help stabilize positioning of ribosome-bound tRNAs. This chain is Large ribosomal subunit protein uL5, found in Geobacillus kaustophilus (strain HTA426).